The following is a 389-amino-acid chain: Galactokinase (389 aa).

Residue 34-37 coordinates substrate; that stretch reads EHTD. ATP-binding positions include Ser-68 and 125–131; that span reads GSGLSSS. Mg(2+) is bound by residues Ser-131 and Glu-163. Asp-175 acts as the Proton acceptor in catalysis. A substrate-binding site is contributed by Tyr-225.

This sequence belongs to the GHMP kinase family. GalK subfamily.

It is found in the cytoplasm. It carries out the reaction alpha-D-galactose + ATP = alpha-D-galactose 1-phosphate + ADP + H(+). It functions in the pathway carbohydrate metabolism; galactose metabolism. Functionally, catalyzes the transfer of the gamma-phosphate of ATP to D-galactose to form alpha-D-galactose-1-phosphate (Gal-1-P). The chain is Galactokinase from Clostridium beijerinckii (strain ATCC 51743 / NCIMB 8052) (Clostridium acetobutylicum).